The following is a 48-amino-acid chain: Light-harvesting polypeptide B-885 beta-1 chain (48 aa).

Residues 1–20 (AEDRKSLSGLTEQEAQEFGT) lie on the Cytoplasmic side of the membrane. Residues 21 to 43 (LYTQGVAFVAVIAVVAHALVWAW) traverse the membrane as a helical segment. His37 contributes to the a bacteriochlorophyll binding site. At 44–48 (RPWLQ) the chain is on the periplasmic side.

This sequence belongs to the antenna complex beta subunit family. The core complex is formed by different alpha and beta chains, binding bacteriochlorophyll molecules, and arranged most probably in tetrameric structures disposed around the reaction center. The non-pigmented gamma chains may constitute additional components.

It is found in the cell inner membrane. In terms of biological role, antenna complexes are light-harvesting systems, which transfer the excitation energy to the reaction centers. In Rhodocyclus tenuis (Rhodospirillum tenue), this protein is Light-harvesting polypeptide B-885 beta-1 chain.